Reading from the N-terminus, the 4582-residue chain is Probable transcription-associated protein 1 (4582 aa).

Over residues 1 to 11 (MSTNPPQPPPS) the composition is skewed to pro residues. Disordered stretches follow at residues 1 to 52 (MSTN…SSGN), 219 to 276 (TTTA…TTTT), 556 to 581 (KEKE…ANTT), 794 to 821 (VGGS…TNSN), 1152 to 1195 (ENEN…NNNI), 1483 to 1570 (QSTT…STIN), 2341 to 2410 (SIKT…NIDD), 2537 to 2567 (TTTT…QVTK), 2637 to 2662 (SDGG…GGAS), and 2741 to 2789 (SPST…TTTE). Polar residues predominate over residues 25 to 37 (PMSTTNPSQPTIT). Composition is skewed to low complexity over residues 38–50 (SSSA…SSSS), 219–250 (TTTA…NTIT), and 258–276 (PSTT…TTTT). Over residues 556-573 (KEKEKELKDPQSLKDKLD) the composition is skewed to basic and acidic residues. The span at 794-811 (VGGSGGSNSSGGGGGGGS) shows a compositional bias: gly residues. Composition is skewed to low complexity over residues 812 to 821 (NSSNNSTNSN), 1158 to 1194 (DNNN…NNNN), 1484 to 1504 (STTT…ETAT), 1515 to 1568 (TEPT…SSST), and 2341 to 2367 (SIKT…DSSS). A compositionally biased stretch (polar residues) spans 2378–2398 (SITTPSQGGVATPNVSDSTPT). Low complexity-rich tracts occupy residues 2537 to 2556 (TTTT…DSSS) and 2650 to 2662 (SSSG…GGAS). The stretch at 2944–2991 (NDINQQQQQQQQQQQQQQQQQQQQQQQQQQQQQQQQQQQQQQHHQQEQ) forms a coiled coil. The FAT domain occupies 3185 to 3815 (VISFLGENYN…YYHFRKLVLE (631 aa)). 2 stretches are compositionally biased toward low complexity: residues 3491-3509 (TNTT…TTTT) and 3824-3916 (TTSP…ANTT). 2 disordered regions span residues 3491–3517 (TNTT…PQQP) and 3821–3928 (SKFT…FSPL). Residues 4171-4541 (VCPRITLYGG…MLENRIDSLT (371 aa)) form the PI3K/PI4K catalytic domain. A G-loop region spans residues 4177–4183 (LYGGNGK). Positions 4312–4337 (NITEDNNISSSSSSSSSSGSNSGENS) are disordered. Residues 4320 to 4337 (SSSSSSSSSSGSNSGENS) are compositionally biased toward low complexity. Positions 4400-4408 (DIGDIDPSK) are catalytic loop. An activation loop region spans residues 4429 to 4451 (NRKLGFDLLQDNPYNQQQLLRLS). The 45-residue stretch at 4538–4582 (DSLTPSSQPDKTCFISPIVKKVNQLIQNSLSSNISQLDQLSCPWL) folds into the FATC domain.

It belongs to the PI3/PI4-kinase family. TRA1 subfamily.

In Dictyostelium discoideum (Social amoeba), this protein is Probable transcription-associated protein 1 (tra1).